The primary structure comprises 1465 residues: Claspin (1465 aa).

Residues 1-12 (MSESLAETAAAA) show a composition bias toward low complexity. Disordered regions lie at residues 1–490 (MSES…KAKV), 544–566 (ATAL…GLRM), and 585–636 (ATEF…TEDM). Phosphoserine occurs at positions 45, 49, 52, 64, 75, 109, and 114. Over residues 121–133 (QAEKKTQKEEGKQ) the composition is skewed to basic and acidic residues. Basic residues predominate over residues 154–163 (KSNKTKKAVK). Over residues 205–216 (EYDHHQQHEKPA) the composition is skewed to basic and acidic residues. Basic residues predominate over residues 217-228 (KTQKSKKLAKKQ). 4 stretches are compositionally biased toward basic and acidic residues: residues 229–246 (KQQE…EKKK), 254–263 (KKSDKSKIDS), 273–286 (EDLK…EPQK), and 296–335 (TNKD…EQIV). Residues 260 to 281 (KIDSLMDNEEDAGEDLKMYQED) adopt a coiled-coil conformation. Over residues 336-346 (KPKKMAKKNKQ) the composition is skewed to basic residues. Phosphoserine occurs at positions 350 and 354. Residues 358-373 (QNEKVDQDHDLKKMSS) are compositionally biased toward basic and acidic residues. Positions 375–388 (NELEMGSDKEDQEM) are enriched in acidic residues. Ser-381, Ser-404, Ser-406, Ser-432, Ser-434, Ser-444, Ser-456, Ser-458, and Ser-468 each carry phosphoserine. The span at 400–417 (QRMDSESEDEIPKTESEK) shows a compositional bias: basic and acidic residues. Over residues 432 to 441 (SESEPEETAE) the composition is skewed to acidic residues. Acidic residues predominate over residues 456–470 (SESEPELDNPEESAG). Positions 564-587 (LRMTREELEAYAKLMEDRAKEATE) form a coiled coil. Over residues 594–606 (ESDEEDDSENEEP) the composition is skewed to acidic residues. The residue at position 693 (Thr-693) is a Phosphothreonine. The stretch at 839-874 (LITKKRMEDLRKKQAEEQEKMAEDEEEGMDVDEEYE) forms a coiled coil. Residues 845 to 859 (MEDLRKKQAEEQEKM) show a composition bias toward basic and acidic residues. The segment at 845 to 977 (MEDLRKKQAE…LDLLQTPKPS (133 aa)) is disordered. Acidic residues-rich tracts occupy residues 860–875 (AEDE…EYEP), 913–942 (ADED…EANP), and 960–969 (DDNSDEDDLD). Ser-963 is subject to Phosphoserine. Thr-973 is subject to Phosphothreonine. A Phosphoserine modification is found at Ser-990. The tract at residues 1058–1154 (CSGTFATQLP…AEPVEEIPET (97 aa)) is disordered. The segment covering 1067–1076 (PSQAPTQQPE) has biased composition (low complexity). Residues Ser-1093 and Ser-1094 each carry the phosphoserine modification. Residues 1094-1103 (SDEEAQEDAL) show a composition bias toward acidic residues. Positions 1109–1123 (RNKKLTKKRPKKKAK) are enriched in basic residues. Residues 1127–1154 (SDDEDSDDEVEEFDEESDAEPVEEIPET) show a composition bias toward acidic residues. Ser-1287 carries the post-translational modification Phosphoserine.

It belongs to the claspin family. Phosphorylated in response to DNA damage by IR and HU treatment. Phosphorylation does not require mei-41 or tefu. Detected in the ovary but not in the testis (at protein level).

It localises to the nucleus. Functionally, required for checkpoint signaling in response to DNA replication stress; either resulting from normal embryogenesis or induced by the DNA synthesis inhibitor hydroxyurea (HU). It is not required for the G2 arrest resulting from DNA double strand breaks induced by ionizing irradiation (IR). Necessary for the timely phosphorylation of Cdk1 at the mid-blastula transition. May have a minor role in maintaining genomic stability in mitotic cells. This chain is Claspin, found in Drosophila melanogaster (Fruit fly).